The sequence spans 233 residues: MPKRGKKYLEAAKLVDRFKAYPIAEAIELVKKTNIAKFDATVEVAFRLGVDPKKADQQIRGAVVLPHGTGKVQRVLVFAKGEKAKEAEAAGADYVGDTEYINKIQQGWFDFDVVVATPDMMGEVGKLGRILGPKGLMPNPKTGTVTFDVAKAVQEIKAGKVEYRVDKAGNIHVPIGKVSFDNEKLAENFTTIYEAILKAKPAAAKGTYVKNVTITSTMGPGIKVDPSTVAVAQ.

This sequence belongs to the universal ribosomal protein uL1 family. Part of the 50S ribosomal subunit.

In terms of biological role, binds directly to 23S rRNA. The L1 stalk is quite mobile in the ribosome, and is involved in E site tRNA release. Its function is as follows. Protein L1 is also a translational repressor protein, it controls the translation of the L11 operon by binding to its mRNA. The sequence is that of Large ribosomal subunit protein uL1 from Geobacillus sp. (strain WCH70).